Reading from the N-terminus, the 195-residue chain is Proteasome subunit beta 1 (195 aa).

Positions 1–6 (MEELPA) are cleaved as a propeptide — removed in mature form; by autocatalysis. Thr-7 (nucleophile) is an active-site residue.

It belongs to the peptidase T1B family. As to quaternary structure, the 20S proteasome core is composed of 14 alpha and 14 beta subunits that assemble into four stacked heptameric rings, resulting in a barrel-shaped structure. The two inner rings, each composed of seven catalytic beta subunits, are sandwiched by two outer rings, each composed of seven alpha subunits. The catalytic chamber with the active sites is on the inside of the barrel. Has a gated structure, the ends of the cylinder being occluded by the N-termini of the alpha-subunits. Is capped at one or both ends by the proteasome regulatory ATPase, PAN.

It localises to the cytoplasm. The catalysed reaction is Cleavage of peptide bonds with very broad specificity.. The formation of the proteasomal ATPase PAN-20S proteasome complex, via the docking of the C-termini of PAN into the intersubunit pockets in the alpha-rings, triggers opening of the gate for substrate entry. Interconversion between the open-gate and close-gate conformations leads to a dynamic regulation of the 20S proteasome proteolysis activity. Component of the proteasome core, a large protease complex with broad specificity involved in protein degradation. The protein is Proteasome subunit beta 1 of Sulfolobus acidocaldarius (strain ATCC 33909 / DSM 639 / JCM 8929 / NBRC 15157 / NCIMB 11770).